A 397-amino-acid polypeptide reads, in one-letter code: Putative F-box protein At2g04810 (397 aa).

Positions 20–68 (SDWSKLCPDVLRKIYETLRSPVDSHRAKIVCSNWYSVWKTCVKRPLCPL) constitute an F-box domain.

The sequence is that of Putative F-box protein At2g04810 from Arabidopsis thaliana (Mouse-ear cress).